Reading from the N-terminus, the 1071-residue chain is Intracellular phospholipase A2 (1071 aa).

The interval 1-22 (MTTTNKDGPFRQQYLPGVHKEP) is disordered. ANK repeat units lie at residues 411–440 (ENCY…TLFC), 479–508 (DGQS…KFTR), 510–539 (DRNE…EIAN), 544–570 (LGNS…ELGL), 578–610 (AGET…NMNA), 614–651 (HGNT…KINL), and 652–681 (RGES…TRCP). In terms of domain architecture, PNPLA spans 748 to 921 (ISMDGGGIRG…ISNNPALDLM (174 aa)). Positions 752–757 (GGGIRG) match the GXGXXG motif. Positions 784–788 (GTSTG) match the GXSXG motif. Ser786 functions as the Nucleophile in the catalytic mechanism. Asp908 acts as the Proton acceptor in catalysis. A DGA/G motif is present at residues 908-910 (DGG).

It belongs to the patatin family.

It catalyses the reaction a 1,2-diacyl-sn-glycero-3-phosphocholine + H2O = a 1-acyl-sn-glycero-3-phosphocholine + a fatty acid + H(+). Its function is as follows. Phospholipase that plays a critical role during oogenesis, ovulation, and/or embryogenesis. This is Intracellular phospholipase A2 from Caenorhabditis elegans.